A 527-amino-acid polypeptide reads, in one-letter code: Sulfate adenylyltransferase (527 aa).

Residues 1–176 (MPIPTPHGGK…LQGINYPKHY (176 aa)) are N-terminal. The interval 177 to 406 (DYVDARKTPT…LRETNPPRSK (230 aa)) is catalytic. Residue glutamine 206 participates in sulfate binding. ATP-binding positions include 206–209 (QTRN) and 302–305 (GRDH). Active-site residues include threonine 207, arginine 208, and asparagine 209. Position 208 (arginine 208) interacts with sulfate. Alanine 306 is a sulfate binding site. Valine 344 is a binding site for ATP. Residues 407–527 (QGFAILIDNS…VNYLKDQGFY (121 aa)) are required for oligomerization; adenylyl-sulfate kinase-like.

It belongs to the sulfate adenylyltransferase family. As to quaternary structure, homohexamer. Dimer of trimers.

It is found in the cytoplasm. The catalysed reaction is sulfate + ATP + H(+) = adenosine 5'-phosphosulfate + diphosphate. Its pathway is sulfur metabolism; hydrogen sulfide biosynthesis; sulfite from sulfate: step 1/3. Catalyzes the first intracellular reaction of sulfate assimilation, forming adenosine-5'-phosphosulfate (APS) from inorganic sulfate and ATP. Plays an important role in sulfate activation as a component of the biosynthesis pathway of sulfur-containing amino acids. This chain is Sulfate adenylyltransferase, found in Candida albicans (strain SC5314 / ATCC MYA-2876) (Yeast).